We begin with the raw amino-acid sequence, 323 residues long: MSQVSITQLFEENQEKLNLQWGEPSAVIDRQLENHQINNSTQELIGHLNFVHPNWIQVLNQTSVNYLDQLDDVSLKKRLNQLAKSQLACLIVADDAPIPNAIRQFVNEQSVPLIQSATASLEIIWRLQSYLARMLAPAITRHGVLLDVLGMGVMITGESGVGKSELALELISRGHGLVADDVVELHRIGPETLEGQCPPLLRDFLEVRGLGMLNIRTIFGETAVRRRKNMKLIVHLEKTVGSSINAYERLPLSNLNEIILNVGIRKVIIPVAAGRNLAVLVEAAVRNYILQLRGIDSTQEFIRRHESEMAGNTAEHFDDSHNE.

Residues His-142 and Lys-163 contribute to the active site. Position 157-164 (157-164 (GESGVGKS)) interacts with ATP. Residue Ser-164 coordinates Mg(2+). Asp-181 acts as the Proton acceptor; for phosphorylation activity. Proton donor; for dephosphorylation activity in catalysis. Residues 205–214 (LEVRGLGMLN) form an important for the catalytic mechanism of both phosphorylation and dephosphorylation region. Residue Glu-206 participates in Mg(2+) binding. The active site involves Arg-249. Residues 270-275 (PVAAGR) form an important for the catalytic mechanism of dephosphorylation region.

Belongs to the HPrK/P family. In terms of assembly, homohexamer. It depends on Mg(2+) as a cofactor.

It carries out the reaction [HPr protein]-L-serine + ATP = [HPr protein]-O-phospho-L-serine + ADP + H(+). The enzyme catalyses [HPr protein]-O-phospho-L-serine + phosphate + H(+) = [HPr protein]-L-serine + diphosphate. Functionally, catalyzes the ATP- as well as the pyrophosphate-dependent phosphorylation of a specific serine residue in HPr, a phosphocarrier protein of the phosphoenolpyruvate-dependent sugar phosphotransferase system (PTS). HprK/P also catalyzes the pyrophosphate-producing, inorganic phosphate-dependent dephosphorylation (phosphorolysis) of seryl-phosphorylated HPr (P-Ser-HPr). The protein is HPr kinase/phosphorylase of Nitrosomonas europaea (strain ATCC 19718 / CIP 103999 / KCTC 2705 / NBRC 14298).